We begin with the raw amino-acid sequence, 101 residues long: Urease subunit beta (101 aa).

It belongs to the urease beta subunit family. Heterotrimer of UreA (gamma), UreB (beta) and UreC (alpha) subunits. Three heterotrimers associate to form the active enzyme.

The protein resides in the cytoplasm. The catalysed reaction is urea + 2 H2O + H(+) = hydrogencarbonate + 2 NH4(+). It participates in nitrogen metabolism; urea degradation; CO(2) and NH(3) from urea (urease route): step 1/1. The polypeptide is Urease subunit beta (Agrobacterium fabrum (strain C58 / ATCC 33970) (Agrobacterium tumefaciens (strain C58))).